Here is a 275-residue protein sequence, read N- to C-terminus: Catechol 1,2-dioxygenase 2 (275 aa).

Residues Tyr158, Tyr192, His216, and His218 each contribute to the Fe cation site.

The protein belongs to the intradiol ring-cleavage dioxygenase family. In terms of assembly, homodimer. Fe(3+) is required as a cofactor.

It carries out the reaction catechol + O2 = cis,cis-muconate + 2 H(+). It participates in aromatic compound metabolism; beta-ketoadipate pathway; 5-oxo-4,5-dihydro-2-furylacetate from catechol: step 1/3. In terms of biological role, can cleave 4-methyl-, 4-chloro-, and 3-methoxycatechol at lower rates than catechol, but has no activity with 4-nitrocatechol or protocatechuic acid. The protein is Catechol 1,2-dioxygenase 2 (catA2) of Acinetobacter lwoffii.